A 358-amino-acid polypeptide reads, in one-letter code: Ubiquitin thioesterase OTU1 (358 aa).

The 83-residue stretch at 5-87 folds into the Ubiquitin-like domain; sequence FSVKLKSKKG…LIVEEKAGAA (83 aa). The segment at 8 to 94 is UBX-like; that stretch reads KLKSKKGQFI…GAAGPTSTPL (87 aa). A disordered region spans residues 83 to 108; that stretch reads KAGAAGPTSTPLASGSGSSTMEDDEA. Residues 89–102 are compositionally biased toward polar residues; that stretch reads PTSTPLASGSGSST. One can recognise an OTU domain in the interval 161 to 285; that stretch reads LLKKVVPADN…GIHYDPLYME (125 aa). The segment at 166–172 is cys-loop; that stretch reads VPADNSC. Asp169 is an active-site residue. Cys172 functions as the Nucleophile in the catalytic mechanism. The variable-loop stretch occupies residues 224–234; that stretch reads IQKADSWGGAI. The segment at 274-278 is his-loop; sequence FDGIH. Ile277 lines the substrate pocket. The active site involves His278. Residues 301–306 form an S2 site region; sequence MGVYQQ. The segment at 328–352 adopts a C2H2-type zinc-finger fold; that stretch reads LRCMDCDVMLVGQGQAQEHAKKTGH. Residue His352 is part of the active site.

The enzyme catalyses Thiol-dependent hydrolysis of ester, thioester, amide, peptide and isopeptide bonds formed by the C-terminal Gly of ubiquitin (a 76-residue protein attached to proteins as an intracellular targeting signal).. Hydrolase that can remove conjugated ubiquitin from proteins and may therefore play an important regulatory role at the level of protein turnover by preventing degradation. The chain is Ubiquitin thioesterase OTU1 from Drosophila pseudoobscura pseudoobscura (Fruit fly).